A 658-amino-acid chain; its full sequence is D-ornithine--citrate ligase (658 aa).

This sequence belongs to the IucA/IucC family.

It carries out the reaction D-ornithine + citrate + ATP = N(5)-[(S)-citryl]-D-ornithine + AMP + diphosphate + H(+). The protein operates within siderophore biosynthesis. Involved in the biosynthesis of the siderophore staphyloferrin A. Catalyzes the ATP-dependent condensation of D-ornithine and citrate to form a citryl-D-ornithine intermediate. The sequence is that of D-ornithine--citrate ligase from Staphylococcus aureus (strain NCTC 8325 / PS 47).